The sequence spans 481 residues: Proline--tRNA ligase (481 aa).

It belongs to the class-II aminoacyl-tRNA synthetase family. ProS type 3 subfamily. In terms of assembly, homodimer.

The protein resides in the cytoplasm. It catalyses the reaction tRNA(Pro) + L-proline + ATP = L-prolyl-tRNA(Pro) + AMP + diphosphate. In terms of biological role, catalyzes the attachment of proline to tRNA(Pro) in a two-step reaction: proline is first activated by ATP to form Pro-AMP and then transferred to the acceptor end of tRNA(Pro). The protein is Proline--tRNA ligase of Chlorobium limicola (strain DSM 245 / NBRC 103803 / 6330).